A 430-amino-acid polypeptide reads, in one-letter code: DD-carboxypeptidase/endopeptidase Mpg (430 aa).

Zn(2+) is bound by residues His295, Asp299, and His375.

Belongs to the peptidase M23B family. As to quaternary structure, monomer. The cofactor is Zn(2+). Likely to be synthesized as a proenzyme. The cleavage of the N-terminal domain is probably required for the activation of the enzyme.

It localises to the cell outer membrane. In terms of biological role, has both endopeptidase and DD-carboxypeptidase activities. Degrades cell wall peptidoglycan (PG) to allow consummate expression of pili. The sequence is that of DD-carboxypeptidase/endopeptidase Mpg from Neisseria meningitidis serogroup B (strain ATCC 13091 / M2091).